The primary structure comprises 501 residues: Glycerol kinase (501 aa).

Thr-12 lines the ADP pocket. ATP is bound by residues Thr-12, Thr-13, and Ser-14. Thr-12 serves as a coordination point for sn-glycerol 3-phosphate. Arg-16 lines the ADP pocket. Sn-glycerol 3-phosphate contacts are provided by Arg-82, Glu-83, Tyr-134, and Asp-244. Residues Arg-82, Glu-83, Tyr-134, Asp-244, and Gln-245 each contribute to the glycerol site. Residues Thr-266 and Gly-310 each contribute to the ADP site. The ATP site is built by Thr-266, Gly-310, Gln-314, and Gly-411. Residues Gly-411 and Asn-415 each coordinate ADP.

This sequence belongs to the FGGY kinase family.

The enzyme catalyses glycerol + ATP = sn-glycerol 3-phosphate + ADP + H(+). The protein operates within polyol metabolism; glycerol degradation via glycerol kinase pathway; sn-glycerol 3-phosphate from glycerol: step 1/1. With respect to regulation, inhibited by fructose 1,6-bisphosphate (FBP). Its function is as follows. Key enzyme in the regulation of glycerol uptake and metabolism. Catalyzes the phosphorylation of glycerol to yield sn-glycerol 3-phosphate. This Methylorubrum populi (strain ATCC BAA-705 / NCIMB 13946 / BJ001) (Methylobacterium populi) protein is Glycerol kinase.